Reading from the N-terminus, the 418-residue chain is Putative competence-damage inducible protein (418 aa).

Belongs to the CinA family.

This is Putative competence-damage inducible protein from Streptococcus pneumoniae serotype 2 (strain D39 / NCTC 7466).